We begin with the raw amino-acid sequence, 813 residues long: Ribosome-releasing factor 2, mitochondrial (813 aa).

A mitochondrion-targeting transit peptide spans 1-20; sequence MLRIVWKPLKIRLPVWRRYQ. Residues 26 to 314 enclose the tr-type G domain; that stretch reads NSIRNVGIIA…AIIDYLPSPV (289 aa). Residues 35–42, 99–103, and 153–156 each bind GTP; these read AHIDAGKT, DTPGH, and NKMD.

Belongs to the TRAFAC class translation factor GTPase superfamily. Classic translation factor GTPase family. EF-G/EF-2 subfamily.

It localises to the mitochondrion. Mitochondrial GTPase that mediates the disassembly of ribosomes from messenger RNA at the termination of mitochondrial protein biosynthesis. Not involved in the GTP-dependent ribosomal translocation step during translation elongation. The protein is Ribosome-releasing factor 2, mitochondrial (mef2) of Schizosaccharomyces pombe (strain 972 / ATCC 24843) (Fission yeast).